The following is a 602-amino-acid chain: Elongation factor 4 (602 aa).

One can recognise a tr-type G domain in the interval 7–189 (KFIRNFSIIA…QLVVAIPPPV (183 aa)). GTP contacts are provided by residues 19 to 24 (DHGKST) and 136 to 139 (NKID).

This sequence belongs to the TRAFAC class translation factor GTPase superfamily. Classic translation factor GTPase family. LepA subfamily.

The protein localises to the cell inner membrane. It catalyses the reaction GTP + H2O = GDP + phosphate + H(+). Functionally, required for accurate and efficient protein synthesis under certain stress conditions. May act as a fidelity factor of the translation reaction, by catalyzing a one-codon backward translocation of tRNAs on improperly translocated ribosomes. Back-translocation proceeds from a post-translocation (POST) complex to a pre-translocation (PRE) complex, thus giving elongation factor G a second chance to translocate the tRNAs correctly. Binds to ribosomes in a GTP-dependent manner. The sequence is that of Elongation factor 4 from Coxiella burnetii (strain RSA 493 / Nine Mile phase I).